The chain runs to 315 residues: Ribosomal RNA small subunit methyltransferase H (315 aa).

S-adenosyl-L-methionine-binding positions include 37-39, D57, D105, and Q112; that span reads GGH.

It belongs to the methyltransferase superfamily. RsmH family.

It is found in the cytoplasm. It catalyses the reaction cytidine(1402) in 16S rRNA + S-adenosyl-L-methionine = N(4)-methylcytidine(1402) in 16S rRNA + S-adenosyl-L-homocysteine + H(+). Its function is as follows. Specifically methylates the N4 position of cytidine in position 1402 (C1402) of 16S rRNA. The polypeptide is Ribosomal RNA small subunit methyltransferase H (Nitrosococcus oceani (strain ATCC 19707 / BCRC 17464 / JCM 30415 / NCIMB 11848 / C-107)).